Reading from the N-terminus, the 220-residue chain is Demethylmenaquinone methyltransferase (220 aa).

Residues Thr47, Asp67, and 93–94 (DA) each bind S-adenosyl-L-methionine.

This sequence belongs to the class I-like SAM-binding methyltransferase superfamily. MenG/UbiE family.

It catalyses the reaction a 2-demethylmenaquinol + S-adenosyl-L-methionine = a menaquinol + S-adenosyl-L-homocysteine + H(+). The protein operates within quinol/quinone metabolism; menaquinone biosynthesis; menaquinol from 1,4-dihydroxy-2-naphthoate: step 2/2. Functionally, methyltransferase required for the conversion of demethylmenaquinol (DMKH2) to menaquinol (MKH2). The chain is Demethylmenaquinone methyltransferase from Thermus thermophilus (strain ATCC BAA-163 / DSM 7039 / HB27).